A 646-amino-acid chain; its full sequence is Calcium-dependent protein kinase 2 (646 aa).

Glycine 2 is lipidated: N-myristoyl glycine. A lipid anchor (S-palmitoyl cysteine) is attached at cysteine 5. Residues 27 to 169 (RIGAEQASSS…HMRRVSSAGL (143 aa)) form a disordered region. Residues 32–43 (QASSSSHGNGQV) are compositionally biased toward polar residues. 2 stretches are compositionally biased toward basic and acidic residues: residues 73-119 (PETK…KREV) and 126-157 (AKPE…EPQK). Residues 186–444 (YSLGRKLGQG…AHQVLCHPWV (259 aa)) form the Protein kinase domain. ATP is bound by residues 192–200 (LGQGQFGTT) and lysine 215. The active-site Proton acceptor is the aspartate 310. Serine 350 carries the phosphoserine modification. The segment at 450-480 (APDKPLDSAVLSRMKQFSAMNKFKKMALRVI) is autoinhibitory domain. EF-hand domains lie at 487-522 (EEIA…VGAN), 523-558 (LKES…LNKI), 559-592 (ERED…EEFG), and 593-628 (VEDA…GSIM). The Ca(2+) site is built by aspartate 500, aspartate 502, serine 504, glutamine 506, glutamate 511, aspartate 536, aspartate 538, serine 540, threonine 542, glutamate 547, aspartate 572, aspartate 574, serine 576, glutamate 583, aspartate 606, aspartate 608, aspartate 610, arginine 612, and glutamate 617.

It belongs to the protein kinase superfamily. Ser/Thr protein kinase family. CDPK subfamily. As to quaternary structure, interacts with 14-3-3 proteins.

The protein resides in the endoplasmic reticulum membrane. The enzyme catalyses L-seryl-[protein] + ATP = O-phospho-L-seryl-[protein] + ADP + H(+). The catalysed reaction is L-threonyl-[protein] + ATP = O-phospho-L-threonyl-[protein] + ADP + H(+). With respect to regulation, activated by calcium. Autophosphorylation may play an important role in the regulation of the kinase activity. Its function is as follows. May play a role in signal transduction pathways that involve calcium as a second messenger. In Arabidopsis thaliana (Mouse-ear cress), this protein is Calcium-dependent protein kinase 2 (CPK2).